The chain runs to 408 residues: Argininosuccinate synthase (408 aa).

ATP-binding positions include 10 to 18 (AYSGGLDTS) and Ala37. 2 residues coordinate L-citrulline: Tyr90 and Ser95. Residue Gly120 coordinates ATP. L-aspartate-binding residues include Thr122, Asn126, and Asp127. Asn126 contacts L-citrulline. L-citrulline is bound by residues Arg130, Ser181, Ser190, Glu266, and Tyr278.

Belongs to the argininosuccinate synthase family. Type 1 subfamily. Homotetramer.

The protein resides in the cytoplasm. The enzyme catalyses L-citrulline + L-aspartate + ATP = 2-(N(omega)-L-arginino)succinate + AMP + diphosphate + H(+). The protein operates within amino-acid biosynthesis; L-arginine biosynthesis; L-arginine from L-ornithine and carbamoyl phosphate: step 2/3. This is Argininosuccinate synthase from Cereibacter sphaeroides (strain ATCC 17025 / ATH 2.4.3) (Rhodobacter sphaeroides).